Reading from the N-terminus, the 436-residue chain is MDVTQSNATKDDANITVTPWPYTETAAAFIILVVSVIILVSIVGNVLVIVAVLTSRALRAPQNLFLVSLACADILVATLVIPFSLANEIMGYWFFGSTWCAFYLALDVLFCTSSIVHLCAISLDRYWSVTKAVSYNLKRTPKRIKSMIAVVWVISAVISFPPLIMTKHDEKECLINDETWYILSSSLVSFFAPGFIMITVYCKIYRVAKQRSSTVFVAKNGLERQPSQSETCFVRKDKFEKESPSSNSSESNQRQEELDDIDLEESATSDNKPKSSRFSNRRRVDGARCCPQRTCRISWVSSQEQSSKQLAVASKTKVAQMREKRFTFVLTVVMGVFVLCWFPFFFTYSLHAICGDSCEPPEALFKLFFWIGYCNSSVNPIIYTIFNRDFRKAFKKICLLDCAAHLRDSCLGTLGRLNAKCIFECHQKSNQEETAN.

At 1–27 (MDVTQSNATKDDANITVTPWPYTETAA) the chain is on the extracellular side. Asn7 and Asn14 each carry an N-linked (GlcNAc...) asparagine glycan. The helical transmembrane segment at 28–52 (AFIILVVSVIILVSIVGNVLVIVAV) threads the bilayer. The Cytoplasmic portion of the chain corresponds to 53-64 (LTSRALRAPQNL). A helical membrane pass occupies residues 65–90 (FLVSLACADILVATLVIPFSLANEIM). Over 91–100 (GYWFFGSTWC) the chain is Extracellular. Cysteines 100 and 173 form a disulfide. The helical transmembrane segment at 101–123 (AFYLALDVLFCTSSIVHLCAISL) threads the bilayer. Topologically, residues 124-144 (DRYWSVTKAVSYNLKRTPKRI) are cytoplasmic. A helical transmembrane segment spans residues 145 to 167 (KSMIAVVWVISAVISFPPLIMTK). Residues 168-178 (HDEKECLINDE) are Extracellular-facing. Residues 179-202 (TWYILSSSLVSFFAPGFIMITVYC) form a helical membrane-spanning segment. Residues 203–329 (KIYRVAKQRS…QMREKRFTFV (127 aa)) are Cytoplasmic-facing. The segment at 238–280 (KFEKESPSSNSSESNQRQEELDDIDLEESATSDNKPKSSRFSN) is disordered. Residues 257 to 267 (ELDDIDLEESA) show a composition bias toward acidic residues. A helical membrane pass occupies residues 330 to 353 (LTVVMGVFVLCWFPFFFTYSLHAI). Residues 354-366 (CGDSCEPPEALFK) are Extracellular-facing. The helical transmembrane segment at 367–387 (LFFWIGYCNSSVNPIIYTIFN) threads the bilayer. Residues 388-436 (RDFRKAFKKICLLDCAAHLRDSCLGTLGRLNAKCIFECHQKSNQEETAN) are Cytoplasmic-facing.

Belongs to the G-protein coupled receptor 1 family.

The protein resides in the cell membrane. Its function is as follows. Alpha-2 adrenergic receptors mediate the catecholamine-induced inhibition of adenylate cyclase through the action of G proteins. This Carassius auratus (Goldfish) protein is Alpha-2 adrenergic receptor.